The chain runs to 599 residues: Phosphomethylpyrimidine synthase (599 aa).

Over residues M1–E16 the composition is skewed to polar residues. Disordered regions lie at residues M1–P53 and E82–S108. Residues Y87–S100 show a composition bias toward basic and acidic residues. Substrate contacts are provided by residues N192, M221, Y250, H286, S306–G308, D347–R350, and E386. A Zn(2+)-binding site is contributed by H390. Y413 is a binding site for substrate. Position 454 (H454) interacts with Zn(2+). The [4Fe-4S] cluster site is built by C534, C537, and C542.

Belongs to the ThiC family. [4Fe-4S] cluster serves as cofactor.

It catalyses the reaction 5-amino-1-(5-phospho-beta-D-ribosyl)imidazole + S-adenosyl-L-methionine = 4-amino-2-methyl-5-(phosphooxymethyl)pyrimidine + CO + 5'-deoxyadenosine + formate + L-methionine + 3 H(+). The protein operates within cofactor biosynthesis; thiamine diphosphate biosynthesis. In terms of biological role, catalyzes the synthesis of the hydroxymethylpyrimidine phosphate (HMP-P) moiety of thiamine from aminoimidazole ribotide (AIR) in a radical S-adenosyl-L-methionine (SAM)-dependent reaction. In Corynebacterium diphtheriae (strain ATCC 700971 / NCTC 13129 / Biotype gravis), this protein is Phosphomethylpyrimidine synthase.